We begin with the raw amino-acid sequence, 688 residues long: Elongation factor G 2 (688 aa).

The tr-type G domain occupies 7-282 (DSIRNIGIIS…AVAAYLPSPR (276 aa)). Residues 16–23 (SHIDAGKT), 80–84 (DTPGH), and 134–137 (NKMD) each bind GTP.

The protein belongs to the TRAFAC class translation factor GTPase superfamily. Classic translation factor GTPase family. EF-G/EF-2 subfamily.

It is found in the cytoplasm. Catalyzes the GTP-dependent ribosomal translocation step during translation elongation. During this step, the ribosome changes from the pre-translocational (PRE) to the post-translocational (POST) state as the newly formed A-site-bound peptidyl-tRNA and P-site-bound deacylated tRNA move to the P and E sites, respectively. Catalyzes the coordinated movement of the two tRNA molecules, the mRNA and conformational changes in the ribosome. This is Elongation factor G 2 from Geobacter metallireducens (strain ATCC 53774 / DSM 7210 / GS-15).